The chain runs to 961 residues: Cytochrome b5-like reductase apf12 (961 aa).

A298 contacts FAD. Residues 429 to 548 (ARPQVDAFAW…IKPAPHFRIA (120 aa)) enclose the FAD-binding FR-type domain. Residues 453-456 (SRIQ), 499-500 (SK), and G753 each bind NADP(+). In terms of domain architecture, Cytochrome b5 heme-binding spans 716 to 793 (LNQITKLELA…LNEMVIGRLD (78 aa)). 753–755 (GGE) lines the FAD pocket.

The protein belongs to the flavoprotein pyridine nucleotide cytochrome reductase family. Requires FAD as cofactor.

It participates in secondary metabolite biosynthesis. In terms of biological role, cytochrome b5-like reductase; part of the gene cluster that mediates the biosynthesis of the cyclic tetrapeptide apicidin F (APF). The non-ribosomal peptide synthetase apf1 incorporates four different amino acids to produce apicidin F: L-phenylalanine, D-pipecolic acid (D-pip), N-methoxy-L-tryptophan and L-2-aminooctanedioic acid. L-Phenylalanine is the only proteinogenic amino acid directly used by apf1. The 3 other apf1 substrates are non-proteinogenic and have to be modified by other enzymes of the cluster. Lysine is converted to delta-1-pyrroline-5-carboxylate (P5C) which is reduced to L-pipecolic acid (L-pip) by apf3. L-pip is epimerized to D-pip, probably by apf1 activity, prior to incorporation. L-Tryptophan is N-oxidyzed by one of the cytochrome P450 monooxygenases (apf7 or apf8), and further methylated at the hydroxy group by the O-methyltransferase apf6 to yield N-methoxy-L-tryptophan. The synthesis of the fourth apf1 substrate is more complex. The fatty acid synthase apf5 is involved in the synthesis of the octanoic acid backbone of L-2-aminooctanedioic acid by fixing one acetyl-CoA unit and three malonyl-CoA units. Then one of the cytochrome P450 monooxygenases (apf7 or apf8) may oxidize this backbone to 2-oxooctanoic acid. The aminotransferase apf4 is predicted to catalyze the exchange of the keto group with an amino group. The next step would be the oxidation of 2-aminooctanoic acid by one of the cytochrome P450 monooxygenases (apf7 or apf8). The last step is the oxidation of 2-amino-8-hydroxyoctanoic acid to 2-aminooctanedioic acid is catalyzed by the FAD-dependent monooxygenase apf9. In Gibberella fujikuroi (strain CBS 195.34 / IMI 58289 / NRRL A-6831) (Bakanae and foot rot disease fungus), this protein is Cytochrome b5-like reductase apf12.